Reading from the N-terminus, the 364-residue chain is MAHRFPALTQEQKKELSEIAQSIVANGKGILAADESVGTMGNRLQRIKVENTEENRRQFREILFSVDSSINQSIGGVILFHETLYQKDSQGKLFRNILKEKGIVVGIKLDQGGAPLAGTNKETTIQGLDGLSERCAQYKKDGVDFGKWRAVLRIADQCPSSLAIQENANALARYASICQQNGLVPIVEPEVIPDGDHDLEHCQYVTEKVLAAVYKALNDHHVYLEGTLLKPNMVTAGHACTKKYTPEQVAMATVTALHRTVPAAVPGICFLSGGMSEEDATLNLNAINLCPLPKPWKLSFSYGRALQASALAAWGGKAANKEATQEAFMKRAMANCQAAKGQYVHTGSSGAASTQSLFTACYTY.

Alanine 2 carries the post-translational modification N-acetylalanine. Position 13 is an N6-succinyllysine (lysine 13). Serine 36 carries the post-translational modification Phosphoserine. Position 39 is a phosphothreonine (threonine 39). Arginine 43 lines the beta-D-fructose 1,6-bisphosphate pocket. Serine 89 carries the phosphoserine modification. Threonine 119 is modified (phosphothreonine). N6-succinyllysine is present on lysine 121. A Phosphoserine modification is found at serine 132. The Proton acceptor role is filled by glutamate 188. The active-site Schiff-base intermediate with dihydroxyacetone-P is the lysine 230. Phosphoserine is present on residues serine 272, serine 276, serine 299, and serine 301. Residue 272-274 (SGG) participates in beta-D-fructose 1,6-bisphosphate binding. Arginine 304 is a binding site for beta-D-fructose 1,6-bisphosphate. Serine 309 is modified (phosphoserine). Residue lysine 317 is modified to N6-succinyllysine.

Belongs to the class I fructose-bisphosphate aldolase family. Homotetramer. Interacts with BBS1, BBS2, BBS4 and BBS7. Forms a ternary complex with G6PD and TP53; this interaction is direct.

Its subcellular location is the cytoplasm. It localises to the cytosol. The protein localises to the cytoskeleton. The protein resides in the microtubule organizing center. It is found in the centrosome. Its subcellular location is the centriolar satellite. It carries out the reaction beta-D-fructose 1,6-bisphosphate = D-glyceraldehyde 3-phosphate + dihydroxyacetone phosphate. The enzyme catalyses beta-D-fructose 1-phosphate = D-glyceraldehyde + dihydroxyacetone phosphate. It participates in carbohydrate degradation; glycolysis; D-glyceraldehyde 3-phosphate and glycerone phosphate from D-glucose: step 4/4. The protein operates within carbohydrate biosynthesis; gluconeogenesis. Its pathway is carbohydrate metabolism; fructose metabolism. In terms of biological role, catalyzes the aldol cleavage of fructose 1,6-biphosphate to form two triosephosphates dihydroxyacetone phosphate and D-glyceraldehyde 3-phosphate in glycolysis as well as the reverse stereospecific aldol addition reaction in gluconeogenesis. In fructolysis, metabolizes fructose 1-phosphate derived from the phosphorylation of dietary fructose by fructokinase into dihydroxyacetone phosphate and D-glyceraldehyde. Acts as an adapter independently of its enzymatic activity, exerts a tumor suppressor role by stabilizing the ternary complex with G6PD and TP53 to inhibit G6PD activity and keep oxidative pentose phosphate metabolism in check. This Homo sapiens (Human) protein is Fructose-bisphosphate aldolase B.